Consider the following 117-residue polypeptide: UPF0102 protein FTN_0424 (117 aa).

This sequence belongs to the UPF0102 family.

The polypeptide is UPF0102 protein FTN_0424 (Francisella tularensis subsp. novicida (strain U112)).